A 67-amino-acid chain; its full sequence is Large ribosomal subunit protein bL35 (67 aa).

The protein belongs to the bacterial ribosomal protein bL35 family.

The polypeptide is Large ribosomal subunit protein bL35 (Paramagnetospirillum magneticum (strain ATCC 700264 / AMB-1) (Magnetospirillum magneticum)).